Here is a 326-residue protein sequence, read N- to C-terminus: tRNA-modifying protein YgfZ (326 aa).

Trp-27 and Trp-189 together coordinate folate.

The protein belongs to the tRNA-modifying YgfZ family.

Its subcellular location is the cytoplasm. Its function is as follows. Folate-binding protein involved in regulating the level of ATP-DnaA and in the modification of some tRNAs. It is probably a key factor in regulatory networks that act via tRNA modification, such as initiation of chromosomal replication. This chain is tRNA-modifying protein YgfZ, found in Salmonella arizonae (strain ATCC BAA-731 / CDC346-86 / RSK2980).